We begin with the raw amino-acid sequence, 324 residues long: Protease HtpX homolog (324 aa).

2 helical membrane passes run 7 to 24 (ALLL…GYLI) and 29 to 46 (GALI…FTYW). Histidine 130 is a Zn(2+) binding site. The active site involves glutamate 131. A Zn(2+)-binding site is contributed by histidine 134. 2 helical membrane-spanning segments follow: residues 145–165 (ITAT…FFGG) and 172–192 (GPGL…AMLV). A Zn(2+)-binding site is contributed by glutamate 201. Residues 288-305 (PASTFSRGAGTAASSGTP) show a composition bias toward polar residues. Residues 288–324 (PASTFSRGAGTAASSGTPRGTGRSPWGGQPRGRGPWG) are disordered.

The protein belongs to the peptidase M48B family. Zn(2+) serves as cofactor.

The protein localises to the cell inner membrane. The sequence is that of Protease HtpX homolog from Rhodopseudomonas palustris (strain TIE-1).